The following is a 229-amino-acid chain: Claudin-25 (229 aa).

Over 1–10 (MAWSFRAKVQ) the chain is Cytoplasmic. A helical transmembrane segment spans residues 11–31 (LGGLLLSLLGWVCSCVTTILP). Topologically, residues 32–81 (QWKTLNLELNEMETWIMGIWEVCVDREEVATVCKAFESFLSLPQELQVAR) are extracellular. Residues 82–102 (ILMVASHGLGLLGLLLCSFGS) form a helical membrane-spanning segment. Over 103 to 124 (ECFQFHRIRWVFKRRLGLLGRT) the chain is Cytoplasmic. Residues 125-145 (LEASASATTLLPVSWVAHATI) form a helical membrane-spanning segment. The Extracellular segment spans residues 146 to 164 (QDFWDDSIPDIIPRWEFGG). A helical transmembrane segment spans residues 165–185 (ALYLGWAAGIFLALGGLLLIF). Over 186 to 229 (SACLGKEDVPFPLMAGPTVPLSCAPVEESDGSFHLMLRPRNLVI) the chain is Cytoplasmic.

Belongs to the claudin family.

It localises to the cell junction. Its subcellular location is the tight junction. The protein localises to the cell membrane. Plays a major role in tight junction-specific obliteration of the intercellular space, through calcium-independent cell-adhesion activity. This chain is Claudin-25 (CLDN25), found in Homo sapiens (Human).